The primary structure comprises 2144 residues: Insulin-like receptor (2144 aa).

Positions 1–43 (MFNMPRGVTKSKSKRGKIKMENDMAAAATTTACTLGHICVLCR) are cleaved as a signal peptide. Residue Asn-74 is glycosylated (N-linked (GlcNAc...) asparagine). Over residues 174–199 (RRQHQQQHHHHYQHHHQQHHQQHHQR) the composition is skewed to basic residues. The disordered stretch occupies residues 174 to 200 (RRQHQQQHHHHYQHHHQQHHQQHHQRQ). Asn-203 carries N-linked (GlcNAc...) asparagine glycosylation. Residues 229–256 (NYKQQQQLQHNQQLPRATPQQKQQEKDR) form a disordered region. Low complexity predominate over residues 232–242 (QQQQLQHNQQL). 6 N-linked (GlcNAc...) asparagine glycosylation sites follow: Asn-265, Asn-356, Asn-376, Asn-406, Asn-468, and Asn-509. 8 disulfide bridges follow: Cys-531/Cys-539, Cys-535/Cys-545, Cys-546/Cys-554, Cys-550/Cys-564, Cys-567/Cys-576, Cys-580/Cys-591, Cys-597/Cys-618, and Cys-635/Cys-638. An FU repeat occupies 542–586 (EHTCCSQDCLGGCVIDKNGNESCISCRNVSFNNICMDSCPKGYYQ). Asn-561 and Asn-569 each carry an N-linked (GlcNAc...) asparagine glycan. Residues Asn-751, Asn-810, Asn-824, Asn-839, Asn-864, Asn-898, Asn-946, Asn-1053, Asn-1147, Asn-1218, and Asn-1265 are each glycosylated (N-linked (GlcNAc...) asparagine). Fibronectin type-III domains follow at residues 825–927 (VTTK…TNPG) and 928–1026 (RPSK…EYDD). The interval 1053 to 1084 (NGSSDKSDGAEGAALDSNAIPNGGATNPSRRR) is disordered. The Fibronectin type-III 3 domain occupies 1210–1305 (LKVDLEHANN…EVEHIKVEPP (96 aa)). A helical transmembrane segment spans residues 1311–1331 (VFFWLLGIGLAFLIVSLFGYV). At 1332 to 2144 (CYLHKRKVPS…PPNGFIGREA (813 aa)) the chain is on the cytoplasmic side. The tract at residues 1351–1354 (NPFY) is chico-binding. The residue at position 1354 (Tyr-1354) is a Phosphotyrosine; by autocatalysis. Residues 1371 to 1659 (IIQLAPLGQG…LEPQCPNSQF (289 aa)) form the Protein kinase domain. ATP contacts are provided by residues 1377-1385 (LGQGSFGMV) and Lys-1405. The active-site Proton acceptor is Asp-1519. Tyr-1545, Tyr-1549, and Tyr-1550 each carry phosphotyrosine; by autocatalysis. Disordered stretches follow at residues 1690 to 1724 (VPLDQDLQDREQQEDATTPLRMGDYQQNSSLDQPP), 1788 to 1871 (RGYE…KKTV), 1886 to 1962 (LFNH…ISDN), and 2020 to 2144 (ISHN…GREA). The residue at position 1816 (Ser-1816) is a Phosphoserine. Composition is skewed to low complexity over residues 1849 to 1860 (STASAGSSNASS) and 1894 to 1916 (SNASHKSNASNAPSTSSNTNLTS). A compositionally biased stretch (acidic residues) spans 2042–2062 (SDEDNEQEEDDEDEDDDVDDE). A compositionally biased stretch (basic and acidic residues) spans 2063–2073 (HVEHIKMERMP). The span at 2084 to 2120 (SKTQPPRSRSVSQTRKSPTNPNSGIGATGAGNRSNLL) shows a compositional bias: polar residues.

The protein belongs to the protein kinase superfamily. Tyr protein kinase family. Insulin receptor subfamily. As to quaternary structure, tetramer of 2 alpha and 2 beta chains linked by disulfide bonds. The alpha chains contribute to the formation of the ligand-binding domain, while the beta chains carry the kinase domain. Interacts (via C-terminal cytoplasmic region) with dock/dreadlocks (via SH2 and SH3 domains); when autophosphorylated. May interact (via beta subunit) with chico/IRS-1; this interaction may lead to tyrosine phosphorylation of the insulin receptor substrate chico. Interacts with Elp6; the interaction may stabilize Elp6. Requires Mn(2+) as cofactor. In terms of processing, the 280 kDa proreceptor is proteolytically processed to form a 120 kDa alpha subunit and a 170 kDa beta subunit. The beta subunit undergoes cell-specific cleavage to generate a 90 kDa beta subunit and a free 60 kDa C-terminal subunit. Both the 90 kDa and the 170 kDa beta subunits can assemble with the alpha subunits to form mature receptors. Post-translationally, autophosphorylated on tyrosine residues, including Tyr-1549 and Tyr-1550, in response to exogenous insulin. Tyr-1549 and Tyr-1550 are dephosphorylated by Ptp61F recruited by the dock/dreadlocks adapter protein. Phosphorylation of Tyr-1354 is required for Chico-binding.

The protein resides in the membrane. Its subcellular location is the cell projection. The protein localises to the axon. It localises to the growth cone membrane. It catalyses the reaction L-tyrosyl-[protein] + ATP = O-phospho-L-tyrosyl-[protein] + ADP + H(+). With respect to regulation, activated in response to insulin. Autophosphorylation activates the kinase activity. In terms of biological role, has a ligand-stimulated tyrosine-protein kinase activity. Binds 3 insulin-like peptide ligands. Regulates cell number and cell size during development by regulating cell growth and survival, affecting body size and organ size, including ovaries and imaginal disks. Plays a role in life-span determination. May be involved in regulation of other neuroendocrine signaling pathways. Involved in the development of the embryonic nervous system. Functions upstream of dock/dreadlocks for photoreceptor (R cell) axon guidance and targeting in the visual system. Involved in the acs mediated recovery of gut enterocytes following the cytoplasmic purge response to intestinal bacterial infection. This chain is Insulin-like receptor, found in Drosophila melanogaster (Fruit fly).